Here is a 127-residue protein sequence, read N- to C-terminus: Putative adhesin P1-like protein MPN_203 (127 aa).

Positions 70-90 (TENFTQPQPQPQALKTTTPVF) are disordered.

The protein belongs to the adhesin P1 family.

The protein is Putative adhesin P1-like protein MPN_203 of Mycoplasma pneumoniae (strain ATCC 29342 / M129 / Subtype 1) (Mycoplasmoides pneumoniae).